The chain runs to 453 residues: Serine--tRNA ligase (453 aa).

249 to 251 contributes to the L-serine binding site; the sequence is TSE. ATP contacts are provided by residues 280 to 282 and V296; that span reads RKE. Residue E303 coordinates L-serine. 367–370 is an ATP binding site; the sequence is EMVS. Position 404 (T404) interacts with L-serine.

The protein belongs to the class-II aminoacyl-tRNA synthetase family. Type-1 seryl-tRNA synthetase subfamily. In terms of assembly, homodimer. The tRNA molecule binds across the dimer.

The protein localises to the cytoplasm. It catalyses the reaction tRNA(Ser) + L-serine + ATP = L-seryl-tRNA(Ser) + AMP + diphosphate + H(+). The catalysed reaction is tRNA(Sec) + L-serine + ATP = L-seryl-tRNA(Sec) + AMP + diphosphate + H(+). Its pathway is aminoacyl-tRNA biosynthesis; selenocysteinyl-tRNA(Sec) biosynthesis; L-seryl-tRNA(Sec) from L-serine and tRNA(Sec): step 1/1. Functionally, catalyzes the attachment of serine to tRNA(Ser). Is also able to aminoacylate tRNA(Sec) with serine, to form the misacylated tRNA L-seryl-tRNA(Sec), which will be further converted into selenocysteinyl-tRNA(Sec). This is Serine--tRNA ligase from Archaeoglobus fulgidus (strain ATCC 49558 / DSM 4304 / JCM 9628 / NBRC 100126 / VC-16).